The chain runs to 120 residues: Alpha-amylase inhibitor Haim-2 (120 aa).

Residues 1 to 32 (MKRYVCSTFVACVMVLCVIPASGAAAHEAVAE) form the signal peptide. 2 disulfide bridges follow: C43–C59 and C77–C104.

In terms of biological role, inhibits mammalian alpha-amylases specifically but has no action on plant and microbial alpha-amylases. This chain is Alpha-amylase inhibitor Haim-2, found in Streptomyces griseosporeus.